Consider the following 266-residue polypeptide: Chymotrypsin-like elastase family member 1 (266 aa).

An N-terminal signal peptide occupies residues 1–16 (MLRFLVFASLVLCGHS). A propeptide spans 17–26 (TEDVPETDAR) (activation peptide). Residues 27–264 (VVGGAEARRN…YISWMNNVIA (238 aa)) enclose the Peptidase S1 domain. Cysteine 56 and cysteine 72 are oxidised to a cystine. Histidine 71 (charge relay system) is an active-site residue. Ca(2+) is bound by residues glutamate 85, asparagine 87, glutamine 90, and glutamate 95. An N-linked (GlcNAc...) asparagine glycan is attached at asparagine 87. Aspartate 119 (charge relay system) is an active-site residue. Disulfide bonds link cysteine 153/cysteine 220, cysteine 184/cysteine 200, and cysteine 210/cysteine 240. Catalysis depends on serine 214, which acts as the Charge relay system.

Belongs to the peptidase S1 family. Elastase subfamily. Ca(2+) is required as a cofactor.

It localises to the secreted. The catalysed reaction is Hydrolysis of proteins, including elastin. Preferential cleavage: Ala-|-Xaa.. Serine proteases that hydrolyze many proteins in addition to elastin. This chain is Chymotrypsin-like elastase family member 1 (Cela1), found in Mus musculus (Mouse).